Here is a 203-residue protein sequence, read N- to C-terminus: Histidine biosynthesis bifunctional protein HisIE (203 aa).

A phosphoribosyl-AMP cyclohydrolase region spans residues 1 to 114 (MLTEQQRREL…FGDASHQWLF (114 aa)). Residues 115–203 (LYQLEQLLAE…VIDDLRKRHQ (89 aa)) form a phosphoribosyl-ATP pyrophosphohydrolase region.

In the N-terminal section; belongs to the PRA-CH family. This sequence in the C-terminal section; belongs to the PRA-PH family.

The protein resides in the cytoplasm. The catalysed reaction is 1-(5-phospho-beta-D-ribosyl)-ATP + H2O = 1-(5-phospho-beta-D-ribosyl)-5'-AMP + diphosphate + H(+). It carries out the reaction 1-(5-phospho-beta-D-ribosyl)-5'-AMP + H2O = 1-(5-phospho-beta-D-ribosyl)-5-[(5-phospho-beta-D-ribosylamino)methylideneamino]imidazole-4-carboxamide. Its pathway is amino-acid biosynthesis; L-histidine biosynthesis; L-histidine from 5-phospho-alpha-D-ribose 1-diphosphate: step 2/9. It functions in the pathway amino-acid biosynthesis; L-histidine biosynthesis; L-histidine from 5-phospho-alpha-D-ribose 1-diphosphate: step 3/9. This Salmonella typhi protein is Histidine biosynthesis bifunctional protein HisIE (hisI).